The sequence spans 347 residues: MDENRKKALAAALTQIEKQFGKGSVMRMGDVGAVRNIEAISTGSLGLDLALGIGGVPKGRVIEIYGPESSGKTTLTLHIIAESQKLGGTAAFVDAEHALDPVYAEKLGVNMTDLLVSQPDTGEQALEITDMLVRSGAVDVVVVDSVAALTPKAEIEGEMGDSHVGLQARLMSQALRKLTGNIKRSNCCVIFINQIRMKIGVMFGSPETTTGGNALKFYASVRLDIRRTGAIKKGDEVIGNETKVKVVKNKVAPPFRQAEFDILYGQGISREGEIIDLGVAEGFIDKSGAWYSYDGNRIGQGKDNVRNFLCENPGIAQAIEARIRDKLLPKGGVEAPAEADVPEPSED.

Residue 66–73 coordinates ATP; that stretch reads GPESSGKT.

Belongs to the RecA family.

The protein resides in the cytoplasm. Functionally, can catalyze the hydrolysis of ATP in the presence of single-stranded DNA, the ATP-dependent uptake of single-stranded DNA by duplex DNA, and the ATP-dependent hybridization of homologous single-stranded DNAs. It interacts with LexA causing its activation and leading to its autocatalytic cleavage. In Allochromatium vinosum (Chromatium vinosum), this protein is Protein RecA.